A 511-amino-acid polypeptide reads, in one-letter code: Pickpocket protein 19 (511 aa).

2 helical membrane passes run 59 to 79 and 471 to 491; these read LWLA…TVLM and GIIS…LFVL.

Belongs to the amiloride-sensitive sodium channel (TC 1.A.6) family. As to expression, expressed in the tracheal system. Expressed in the taste-sensing terminal organ of the larval head. In adults, expressed in hairs on the tibia, femur and wing margin, but not in hairs on the tarsi of the leg.

The protein resides in the membrane. Its function is as follows. Part of a complex that plays a role in tracheal liquid clearance. In both larvae and adults, contributes to the behavioral response to salt. Probable role in sodium transport. This is Pickpocket protein 19 (ppk19) from Drosophila melanogaster (Fruit fly).